We begin with the raw amino-acid sequence, 197 residues long: Xanthine phosphoribosyltransferase (197 aa).

Residues leucine 20 and asparagine 27 each contribute to the xanthine site. 5-phospho-alpha-D-ribose 1-diphosphate is bound at residue 128–132; the sequence is ANGQA. Residue lysine 156 coordinates xanthine.

Belongs to the purine/pyrimidine phosphoribosyltransferase family. Xpt subfamily. Homodimer.

The protein resides in the cytoplasm. It catalyses the reaction XMP + diphosphate = xanthine + 5-phospho-alpha-D-ribose 1-diphosphate. It participates in purine metabolism; XMP biosynthesis via salvage pathway; XMP from xanthine: step 1/1. Functionally, converts the preformed base xanthine, a product of nucleic acid breakdown, to xanthosine 5'-monophosphate (XMP), so it can be reused for RNA or DNA synthesis. The polypeptide is Xanthine phosphoribosyltransferase (Bacillus cereus (strain G9842)).